Consider the following 31-residue polypeptide: Ranatuerin-2PL (31 aa).

A disulfide bridge connects residues C23 and C29.

As to expression, expressed by the skin glands.

It is found in the secreted. Antimicrobial activity against Gram-negative bacterium E.coli. In Lithobates palustris (Pickerel frog), this protein is Ranatuerin-2PL.